A 269-amino-acid chain; its full sequence is Nitrogen regulatory protein DAL80 (269 aa).

A GATA-type zinc finger spans residues 31–55 (CQNCFTVKTPLWRRDEHGTVLCNAC).

The protein resides in the nucleus. Functionally, negative regulator of multiple nitrogen catabolic genes including the allantoin pathway genes. The chain is Nitrogen regulatory protein DAL80 (DAL80) from Saccharomyces cerevisiae (strain ATCC 204508 / S288c) (Baker's yeast).